Reading from the N-terminus, the 496-residue chain is Lysine--tRNA ligase (496 aa).

The Mg(2+) site is built by E409 and E416.

This sequence belongs to the class-II aminoacyl-tRNA synthetase family. As to quaternary structure, homodimer. Mg(2+) is required as a cofactor.

The protein resides in the cytoplasm. The catalysed reaction is tRNA(Lys) + L-lysine + ATP = L-lysyl-tRNA(Lys) + AMP + diphosphate. This is Lysine--tRNA ligase from Streptococcus gordonii (strain Challis / ATCC 35105 / BCRC 15272 / CH1 / DL1 / V288).